The chain runs to 268 residues: Zygote formation protein zyg1 (268 aa).

Plays an essential role in zygote formation by inducing sexual cell fusion. Overexpressing cells eventually formed many loose mounds, in which giant multinucleate cells were surrounded by normal-sized cells. The sequence is that of Zygote formation protein zyg1 (zyg1) from Dictyostelium mucoroides (Slime mold).